Reading from the N-terminus, the 287-residue chain is Pantothenate synthetase (287 aa).

Position 30-37 (30-37 (MGNLHSGH)) interacts with ATP. H37 functions as the Proton donor in the catalytic mechanism. Residue Q61 coordinates (R)-pantoate. Residue Q61 coordinates beta-alanine. An ATP-binding site is contributed by 149 to 152 (GEKD). A (R)-pantoate-binding site is contributed by Q155. ATP is bound by residues V178 and 186–189 (LSSR).

Belongs to the pantothenate synthetase family. As to quaternary structure, homodimer.

The protein resides in the cytoplasm. It carries out the reaction (R)-pantoate + beta-alanine + ATP = (R)-pantothenate + AMP + diphosphate + H(+). The protein operates within cofactor biosynthesis; (R)-pantothenate biosynthesis; (R)-pantothenate from (R)-pantoate and beta-alanine: step 1/1. Catalyzes the condensation of pantoate with beta-alanine in an ATP-dependent reaction via a pantoyl-adenylate intermediate. This Pseudomonas entomophila (strain L48) protein is Pantothenate synthetase.